We begin with the raw amino-acid sequence, 453 residues long: Bis(5'-adenosyl)-triphosphatase ENPP4 (453 aa).

The N-terminal stretch at 1–18 is a signal peptide; that stretch reads MKLLLMLLFSGLMTGCRG. At 19–407 the chain is on the extracellular side; it reads NSSSASPPKL…DQWCINLPEA (389 aa). Zn(2+) contacts are provided by D34 and T70. The active-site AMP-threonine intermediate is the T70. Residues N91 and Y154 each coordinate substrate. N166 is a glycosylation site (N-linked (GlcNAc...) asparagine). Residues D189, H193, D237, and H238 each coordinate Zn(2+). A substrate-binding site is contributed by D189. Residues C254 and C287 are joined by a disulfide bond. The N-linked (GlcNAc...) asparagine glycan is linked to N276. A Zn(2+)-binding site is contributed by H336. C394 and C401 are disulfide-bonded. Residues 408–428 form a helical membrane-spanning segment; the sequence is IGIVIGALLVLTTLTCLIIIM. Residues 429 to 453 lie on the Cytoplasmic side of the membrane; it reads QNRVSGPRPFSRLQLQEDDDDPLIG.

The protein belongs to the nucleotide pyrophosphatase/phosphodiesterase family. It depends on Zn(2+) as a cofactor.

The protein resides in the cell membrane. It catalyses the reaction P(1),P(3)-bis(5'-adenosyl) triphosphate + H2O = AMP + ADP + 2 H(+). Functionally, hydrolyzes extracellular Ap3A into AMP and ADP, and Ap4A into AMP and ATP. Ap3A and Ap4A are diadenosine polyphosphates thought to induce proliferation of vascular smooth muscle cells. Acts as a procoagulant, mediating platelet aggregation at the site of nascent thrombus via release of ADP from Ap3A and activation of ADP receptors. This Bos taurus (Bovine) protein is Bis(5'-adenosyl)-triphosphatase ENPP4 (ENPP4).